Here is a 332-residue protein sequence, read N- to C-terminus: MTKPIVLSGAQPSGELTIGNYMGALRQWVAMQDSHDCLYCVVDLHAITVRQDPQALREACLDTLALYLACGVDPKKSTVFIQSQVPQHTQLGWALNCYTQMGELSRMTQFKDKSQKHANNINVGLFGYPVLMAADILLYQANEIPVGQDQKQHLELTRDIATRFNNAYGETFTIPEPFIPEHGAKVMSLQDPLKKMSKSDDNRNNVIGLLEDPKAVMKKLKKAMTDSDEPPVVRFDIENKPGVSNLLSLMSGITGQSIASLEAEFEGKMYGHLKGAAGEAVVGMLEPLQERYRALRADRAYLDQVMRAGAENAQARAEVTLKKVYEKIGLLV.

Residues Q11–S13 and G19–N20 contribute to the ATP site. Positions P12–N20 match the 'HIGH' region motif. D135 lines the L-tryptophan pocket. ATP-binding positions include G147 to D149, V186, and K195 to S199. A 'KMSKS' region motif is present at residues K195–S199.

This sequence belongs to the class-I aminoacyl-tRNA synthetase family. Homodimer.

The protein localises to the cytoplasm. The catalysed reaction is tRNA(Trp) + L-tryptophan + ATP = L-tryptophyl-tRNA(Trp) + AMP + diphosphate + H(+). Catalyzes the attachment of tryptophan to tRNA(Trp). This Shewanella oneidensis (strain ATCC 700550 / JCM 31522 / CIP 106686 / LMG 19005 / NCIMB 14063 / MR-1) protein is Tryptophan--tRNA ligase.